The chain runs to 741 residues: Ribosome-releasing factor 2, mitochondrial (741 aa).

A mitochondrion-targeting transit peptide spans Met-1–Tyr-29. Residues Ser-31–Glu-310 form the tr-type G domain. GTP contacts are provided by residues Ala-40–Thr-47, Asp-104–His-108, and Asn-158–Asp-161.

It belongs to the TRAFAC class translation factor GTPase superfamily. Classic translation factor GTPase family. EF-G/EF-2 subfamily.

The protein localises to the mitochondrion. In terms of biological role, mitochondrial GTPase that mediates the disassembly of ribosomes from messenger RNA at the termination of mitochondrial protein biosynthesis. Not involved in the GTP-dependent ribosomal translocation step during translation elongation. The sequence is that of Ribosome-releasing factor 2, mitochondrial from Drosophila ananassae (Fruit fly).